The primary structure comprises 365 residues: Anhydro-N-acetylmuramic acid kinase (365 aa).

12–19 (GTSMDGMD) contacts ATP.

This sequence belongs to the anhydro-N-acetylmuramic acid kinase family.

It catalyses the reaction 1,6-anhydro-N-acetyl-beta-muramate + ATP + H2O = N-acetyl-D-muramate 6-phosphate + ADP + H(+). Its pathway is amino-sugar metabolism; 1,6-anhydro-N-acetylmuramate degradation. It participates in cell wall biogenesis; peptidoglycan recycling. Functionally, catalyzes the specific phosphorylation of 1,6-anhydro-N-acetylmuramic acid (anhMurNAc) with the simultaneous cleavage of the 1,6-anhydro ring, generating MurNAc-6-P. Is required for the utilization of anhMurNAc either imported from the medium or derived from its own cell wall murein, and thus plays a role in cell wall recycling. In Pseudomonas paraeruginosa (strain DSM 24068 / PA7) (Pseudomonas aeruginosa (strain PA7)), this protein is Anhydro-N-acetylmuramic acid kinase.